We begin with the raw amino-acid sequence, 589 residues long: 2-succinyl-5-enolpyruvyl-6-hydroxy-3-cyclohexene-1-carboxylate synthase (589 aa).

A disordered region spans residues 198–222 (DAATTEGAHDSHAPSQPTRGPRKLP).

The protein belongs to the TPP enzyme family. MenD subfamily. Homodimer. Mg(2+) is required as a cofactor. The cofactor is Mn(2+). It depends on thiamine diphosphate as a cofactor.

The enzyme catalyses isochorismate + 2-oxoglutarate + H(+) = 5-enolpyruvoyl-6-hydroxy-2-succinyl-cyclohex-3-ene-1-carboxylate + CO2. Its pathway is quinol/quinone metabolism; 1,4-dihydroxy-2-naphthoate biosynthesis; 1,4-dihydroxy-2-naphthoate from chorismate: step 2/7. The protein operates within quinol/quinone metabolism; menaquinone biosynthesis. Catalyzes the thiamine diphosphate-dependent decarboxylation of 2-oxoglutarate and the subsequent addition of the resulting succinic semialdehyde-thiamine pyrophosphate anion to isochorismate to yield 2-succinyl-5-enolpyruvyl-6-hydroxy-3-cyclohexene-1-carboxylate (SEPHCHC). This chain is 2-succinyl-5-enolpyruvyl-6-hydroxy-3-cyclohexene-1-carboxylate synthase, found in Corynebacterium jeikeium (strain K411).